The primary structure comprises 284 residues: Pantothenate synthetase (284 aa).

Methionine 30–histidine 37 contacts ATP. Histidine 37 functions as the Proton donor in the catalytic mechanism. Residue glutamine 61 coordinates (R)-pantoate. Glutamine 61 is a beta-alanine binding site. Glycine 149 to aspartate 152 serves as a coordination point for ATP. Glutamine 155 is a binding site for (R)-pantoate. ATP-binding positions include valine 178 and leucine 186 to arginine 189.

This sequence belongs to the pantothenate synthetase family. Homodimer.

Its subcellular location is the cytoplasm. It catalyses the reaction (R)-pantoate + beta-alanine + ATP = (R)-pantothenate + AMP + diphosphate + H(+). It functions in the pathway cofactor biosynthesis; (R)-pantothenate biosynthesis; (R)-pantothenate from (R)-pantoate and beta-alanine: step 1/1. Functionally, catalyzes the condensation of pantoate with beta-alanine in an ATP-dependent reaction via a pantoyl-adenylate intermediate. The chain is Pantothenate synthetase from Yersinia pseudotuberculosis serotype O:1b (strain IP 31758).